The sequence spans 173 residues: Disulfide bond formation protein B (173 aa).

At 1-14 (MIEFLRRIAAHRLA) the chain is on the cytoplasmic side. Residues 15-31 (WSLLAASALFLELSALF) form a helical membrane-spanning segment. The Periplasmic segment spans residues 32-49 (FQHVLGLHPCVMCVYERI). Cysteine 41 and cysteine 44 are oxidised to a cystine. A helical membrane pass occupies residues 50 to 65 (ATLGVLTAGLLGMVAP). Topologically, residues 66–72 (QKWYVRW) are cytoplasmic. The chain crosses the membrane as a helical span at residues 73–90 (SALLLWGSSAFWGLKLAL). The Periplasmic portion of the chain corresponds to 91 to 145 (KHVDYQVNPSPFNVCEGFVDFPSWAPLDQWIPWMFYPDGDCSEVTWQFLSFSMPQ). Residues cysteine 105 and cysteine 131 are joined by a disulfide bond. A helical transmembrane segment spans residues 146–164 (WLVAIFAVYLLVFVVVAIG). At 165–173 (NLVKGRCCS) the chain is on the cytoplasmic side.

It belongs to the DsbB family.

It localises to the cell inner membrane. Required for disulfide bond formation in some periplasmic proteins. Acts by oxidizing the DsbA protein. This Aeromonas hydrophila subsp. hydrophila (strain ATCC 7966 / DSM 30187 / BCRC 13018 / CCUG 14551 / JCM 1027 / KCTC 2358 / NCIMB 9240 / NCTC 8049) protein is Disulfide bond formation protein B.